The primary structure comprises 203 residues: MSTNSRAGDAYAYALLKVLFNETKDFDSFSDLVGDVLDFVTIFNTCPSIEEFFANPTYSPIQKKQFLYDFFGRSLNPILMSFLYLLCDTKRIIYISSIISIFLETLLKNTNSHIVEVQTPTGKDYKLDISKLETTLSGWFNKIQKNNDEAVNFLNFDESLVIFTVKEVPGLLGGFRLNFVTDSKVIDFSIAGKIKRLAAVLNY.

The protein belongs to the ATPase delta chain family. As to quaternary structure, F-type ATPases have 2 components, F(1) - the catalytic core - and F(0) - the membrane proton channel. F(1) has five subunits: alpha(3), beta(3), gamma(1), delta(1), epsilon(1). CF(0) has four main subunits: a(1), b(1), b'(1) and c(10-14). The alpha and beta chains form an alternating ring which encloses part of the gamma chain. F(1) is attached to F(0) by a central stalk formed by the gamma and epsilon chains, while a peripheral stalk is formed by the delta, b and b' chains.

It localises to the plastid. It is found in the chloroplast thylakoid membrane. Its function is as follows. F(1)F(0) ATP synthase produces ATP from ADP in the presence of a proton or sodium gradient. F-type ATPases consist of two structural domains, F(1) containing the extramembraneous catalytic core and F(0) containing the membrane proton channel, linked together by a central stalk and a peripheral stalk. During catalysis, ATP synthesis in the catalytic domain of F(1) is coupled via a rotary mechanism of the central stalk subunits to proton translocation. In terms of biological role, this protein is part of the stalk that links CF(0) to CF(1). It either transmits conformational changes from CF(0) to CF(1) or is implicated in proton conduction. The polypeptide is ATP synthase subunit delta, chloroplastic (Heterosigma akashiwo (strain NIES-293 / 8280G21-1)).